A 332-amino-acid chain; its full sequence is Mitoferrin-1 (332 aa).

Solcar repeat units lie at residues 31-119, 129-213, and 220-314; these read ASLG…IKRS, NSHI…MQEH, and YRPE…FKYF. The next 6 helical transmembrane spans lie at 33-52, 94-113, 131-150, 188-207, 222-241, and 289-308; these read LGTH…TVMY, GLNI…FACY, HIAN…AVMN, SYST…FITY, PETH…AVTT, and GIQA…WSVY.

The protein belongs to the mitochondrial carrier (TC 2.A.29) family. In terms of tissue distribution, highly expressed in hematopoietic organs, Expressed in the intermediate cell mass (ICM), a tissue equivalent to the mammalian extraembryonic yolk-sac blood islands. Colocalizes with gata1.

The protein localises to the mitochondrion inner membrane. The catalysed reaction is Fe(2+)(in) = Fe(2+)(out). Mitochondrial iron transporter that specifically mediates iron uptake in developing erythroid cells, thereby playing an essential role in heme biosynthesis. This chain is Mitoferrin-1 (slc25a37), found in Danio rerio (Zebrafish).